The chain runs to 273 residues: Co-chaperone protein DjlA (273 aa).

Topologically, residues 1-6 (MHYWGK) are periplasmic. The chain crosses the membrane as a helical span at residues 7–31 (LLGLIFGVVSGAGFWGIVIGLFIGH). Residues 32–273 (MLDRASVRGN…DLIKKEKGFK (242 aa)) are Cytoplasmic-facing. One can recognise a J domain in the interval 207 to 273 (DACKVLGVRE…DLIKKEKGFK (67 aa)).

Homodimer.

It localises to the cell inner membrane. Functionally, regulatory DnaK co-chaperone. Direct interaction between DnaK and DjlA is needed for the induction of the wcaABCDE operon, involved in the synthesis of a colanic acid polysaccharide capsule, possibly through activation of the RcsB/RcsC phosphotransfer signaling pathway. The colanic acid capsule may help the bacterium survive conditions outside the host. This Photorhabdus laumondii subsp. laumondii (strain DSM 15139 / CIP 105565 / TT01) (Photorhabdus luminescens subsp. laumondii) protein is Co-chaperone protein DjlA.